Here is a 159-residue protein sequence, read N- to C-terminus: Ribosomal RNA large subunit methyltransferase H (159 aa).

S-adenosyl-L-methionine contacts are provided by residues Leu-76, Gly-108, and 127-132 (FSKMTF).

It belongs to the RNA methyltransferase RlmH family. As to quaternary structure, homodimer.

It is found in the cytoplasm. The enzyme catalyses pseudouridine(1915) in 23S rRNA + S-adenosyl-L-methionine = N(3)-methylpseudouridine(1915) in 23S rRNA + S-adenosyl-L-homocysteine + H(+). Its function is as follows. Specifically methylates the pseudouridine at position 1915 (m3Psi1915) in 23S rRNA. The protein is Ribosomal RNA large subunit methyltransferase H of Exiguobacterium sp. (strain ATCC BAA-1283 / AT1b).